The primary structure comprises 96 residues: Gastrolith matrix protein (96 aa).

9 repeat units span residues 11–15 (GSAGF), 16–20 (GSTNF), 21–25 (GSSGF), 30–34 (GSTGF), 35–39 (GSAGF), 50–54 (GSAAF), 55–59 (GSSSF), 65–69 (GSTGF), and 70–74 (GSSSF). The 9 X 5 AA tandem repeat of G-S-X-X-F stretch occupies residues 11–74 (GSAGFGSTNF…GSTGFGSSSF (64 aa)). Residues 75-96 (GSTSGLPYLVVIPNNPAVGGLR) are disordered.

Post-translationally, the N-terminus is blocked. As to expression, expressed in the gastroliths.

The protein resides in the secreted. Associates with chitin and plays a role in calcification. This Procambarus clarkii (Red swamp crayfish) protein is Gastrolith matrix protein.